We begin with the raw amino-acid sequence, 374 residues long: Ferroptosis suppressor protein 1 (374 aa).

The N-myristoyl glycine moiety is linked to residue glycine 2. Residues 13 to 35 (VVIVGGGFAGIAAASQLKSFGIP) traverse the membrane as a helical segment. 6-hydroxy-FAD is bound by residues 17 to 21 (GGGFA), arginine 53, and valine 81. Residue lysine 167 is modified to N6-acetyllysine. A 6-hydroxy-FAD-binding site is contributed by aspartate 285.

It belongs to the FAD-dependent oxidoreductase family. 6-hydroxy-FAD serves as cofactor. In terms of processing, N-myristoylation at Gly-2 mediates the recruitment to lipid droplets and plasma membrane. Acetylation at Lys-167 prevents AIFM2 ubiquitination and degradation, thereby inhibiting ferroptosis. KAT2B mediates acetylation at Lys-167, while HDAC3 removes it. Post-translationally, ubiquitinated. AIFM2 undergoes 'Lys-29'-ubiquitination and proteasomal degradation, which is inhibited by acetylation at Lys-167.

The protein resides in the lipid droplet. It localises to the cell membrane. Its subcellular location is the cytoplasm. The protein localises to the mitochondrion membrane. It is found in the nucleus. It catalyses the reaction ubiquinone-10 + NADH + H(+) = ubiquinol-10 + NAD(+). The catalysed reaction is phylloquinone + NADH + H(+) = phylloquinol + NAD(+). The enzyme catalyses menaquinone-4 + NADH + H(+) = menaquinol-4 + NAD(+). It carries out the reaction menadione + NADH + H(+) = menadiol + NAD(+). With respect to regulation, the modification by 4-hydroxy-2-nonenal (HNE) adduction in mitochondria results in loss of the oxidoreductase activity and activation of a novel function in mitochondrial oxidative stress signaling. An NAD(P)H-dependent oxidoreductase that acts as a key inhibitor of ferroptosis. At the plasma membrane, catalyzes reduction of coenzyme Q/ubiquinone-10 to ubiquinol-10, a lipophilic radical-trapping antioxidant that prevents lipid oxidative damage and consequently ferroptosis. Acts in parallel to GPX4 to suppress phospholipid peroxidation and ferroptosis. This anti-ferroptotic function is independent of cellular glutathione levels. Also acts as a potent radical-trapping antioxidant by mediating warfarin-resistant vitamin K reduction in the canonical vitamin K cycle: catalyzes NAD(P)H-dependent reduction of vitamin K (phylloquinone, menaquinone-4 and menadione) to hydroquinone forms. Hydroquinones act as potent radical-trapping antioxidants inhibitor of phospholipid peroxidation and ferroptosis. May play a role in mitochondrial stress signaling. Upon oxidative stress, associates with the lipid peroxidation end product 4-hydroxy-2-nonenal (HNE) forming a lipid adduct devoid of oxidoreductase activity, which then translocates from mitochondria into the nucleus triggering DNA damage and cell death. This chain is Ferroptosis suppressor protein 1 (aifm2), found in Xenopus laevis (African clawed frog).